A 103-amino-acid polypeptide reads, in one-letter code: DNA-directed RNA polymerase subunit omega (103 aa).

The disordered stretch occupies residues 52 to 103 (EIESGNVTIHPDPEGKREAVRRRIEEEKRRKEEEEKKIKEQIAKEKEDGEKI). Positions 62–103 (PDPEGKREAVRRRIEEEKRRKEEEEKKIKEQIAKEKEDGEKI) are enriched in basic and acidic residues.

It belongs to the RNA polymerase subunit omega family. The RNAP catalytic core consists of 2 alpha, 1 beta, 1 beta' and 1 omega subunit. When a sigma factor is associated with the core the holoenzyme is formed, which can initiate transcription.

The enzyme catalyses RNA(n) + a ribonucleoside 5'-triphosphate = RNA(n+1) + diphosphate. In terms of biological role, promotes RNA polymerase assembly. Latches the N- and C-terminal regions of the beta' subunit thereby facilitating its interaction with the beta and alpha subunits. The chain is DNA-directed RNA polymerase subunit omega from Streptococcus pneumoniae serotype 19F (strain G54).